The following is a 463-amino-acid chain: Argininosuccinate lyase (463 aa).

Belongs to the lyase 1 family. Argininosuccinate lyase subfamily.

Its subcellular location is the cytoplasm. It carries out the reaction 2-(N(omega)-L-arginino)succinate = fumarate + L-arginine. It functions in the pathway amino-acid biosynthesis; L-arginine biosynthesis; L-arginine from L-ornithine and carbamoyl phosphate: step 3/3. This Ruegeria pomeroyi (strain ATCC 700808 / DSM 15171 / DSS-3) (Silicibacter pomeroyi) protein is Argininosuccinate lyase.